The following is a 75-amino-acid chain: Small ribosomal subunit protein bS18 (75 aa).

N-acetylalanine is present on Ala2.

This sequence belongs to the bacterial ribosomal protein bS18 family. Part of the 30S ribosomal subunit. Forms a tight heterodimer with protein bS6.

Functionally, binds as a heterodimer with protein bS6 to the central domain of the 16S rRNA, where it helps stabilize the platform of the 30S subunit. The polypeptide is Small ribosomal subunit protein bS18 (rpsR) (Salmonella typhimurium (strain LT2 / SGSC1412 / ATCC 700720)).